The following is a 312-amino-acid chain: Polyamine aminopropyltransferase (312 aa).

The PABS domain occupies 7–247 (FFWAQEYFTP…GPLGFALAAQ (241 aa)). Gln-36 contacts S-methyl-5'-thioadenosine. The spermidine site is built by His-67 and Glu-95. S-methyl-5'-thioadenosine contacts are provided by residues Asp-115 and 147-148 (DA). Catalysis depends on Asp-165, which acts as the Proton acceptor. Pro-174 contributes to the S-methyl-5'-thioadenosine binding site.

It belongs to the spermidine/spermine synthase family. Homodimer or homotetramer.

It is found in the cytoplasm. It carries out the reaction S-adenosyl 3-(methylsulfanyl)propylamine + putrescine = S-methyl-5'-thioadenosine + spermidine + H(+). The protein operates within amine and polyamine biosynthesis; spermidine biosynthesis; spermidine from putrescine: step 1/1. Catalyzes the irreversible transfer of a propylamine group from the amino donor S-adenosylmethioninamine (decarboxy-AdoMet) to putrescine (1,4-diaminobutane) to yield spermidine. The protein is Polyamine aminopropyltransferase of Synechococcus sp. (strain JA-3-3Ab) (Cyanobacteria bacterium Yellowstone A-Prime).